The sequence spans 210 residues: Noranthrone monooxygenase (210 aa).

Transmembrane regions (helical) follow at residues 59–79 (TGSFLTGAMMNLHLLTIPILI), 105–125 (GIALVTGALYGYAAWAKYSVG), 131–151 (WMVAGVTTVSMVPYTWMFMNA), and 188–208 (VRALFPLAGSVMGMLGVCGVV).

This sequence belongs to the anthrone oxygenase family.

It is found in the membrane. The enzyme catalyses noranthrone + O2 = norsolorinic acid + H2O. Its pathway is mycotoxin biosynthesis; aflatoxin biosynthesis. Monooxygenase that converts norsolorinic acid anthrone to norsolorinic acid during aflatoxin biosynthesis. The polypeptide is Noranthrone monooxygenase (hypC) (Aspergillus flavus (strain ATCC 200026 / FGSC A1120 / IAM 13836 / NRRL 3357 / JCM 12722 / SRRC 167)).